A 796-amino-acid polypeptide reads, in one-letter code: Toll-like receptor 6 (796 aa).

Residues Met-1 to Gly-31 form the signal peptide. At Asn-32–Leu-586 the chain is on the extracellular side. 19 LRR repeats span residues Thr-54–Glu-77, Leu-78–Asp-101, Leu-102–Ser-122, Phe-123–Gln-147, Leu-148–His-168, Leu-169–Ala-196, Lys-197–Thr-219, Leu-220–Thr-250, Leu-251–Pro-277, Val-278–Thr-303, Leu-304–Glu-330, Met-331–Thr-354, Phe-355–Lys-378, Leu-379–Ser-404, Leu-405–Ser-429, Ile-430–Pro-450, Arg-451–Ala-474, Leu-475–Ser-496, and Leu-497–Lys-520. A disulfide bridge connects residues Cys-117 and Cys-139. Asn-144 is a glycosylation site (N-linked (GlcNAc...) asparagine). Residues Asn-186 and Asn-214 are each glycosylated (N-linked (GlcNAc...) asparagine). The cysteines at positions 235 and 265 are disulfide-linked. N-linked (GlcNAc...) asparagine glycosylation is found at Asn-253 and Asn-285. A disulfide bridge connects residues Cys-348 and Cys-373. Residue Asn-359 is glycosylated (N-linked (GlcNAc...) asparagine). 2 N-linked (GlcNAc...) asparagine glycosylation sites follow: Asn-423 and Asn-434. Cys-424 and Cys-447 are disulfide-bonded. Residues Met-521–Phe-575 form the LRRCT domain. The N-linked (GlcNAc...) asparagine glycan is linked to Asn-583. The chain crosses the membrane as a helical span at residues Leu-587 to Ile-607. Residues Tyr-608–Ser-796 are Cytoplasmic-facing. One can recognise a TIR domain in the interval Leu-640 to Phe-781.

The protein belongs to the Toll-like receptor family. In terms of assembly, homodimer (via cytoplasmic TIR domain). Heterodimer with TLR2 via their respective extracellular domains. Binds MYD88 via their respective TIR domains. Interacts with CD36, following CD36 stimulation by oxLDL or amyloid-beta 42, and forms a heterodimer with TLR4. The trimeric complex is internalized and triggers inflammatory response. LYN kinase activity facilitates TLR4:TLR6 heterodimerization and signal initiation. The heterodimer TLR2:TLR6 interacts with CD14 and CD36 in response to triacylated lipopeptides. Detected in monocytes, CD11c+ immature dendritic cells, plasmacytoid pre-dendritic cells and dermal microvessel endothelial cells.

It is found in the cell membrane. The protein localises to the cytoplasmic vesicle. Its subcellular location is the phagosome membrane. The protein resides in the membrane raft. It localises to the golgi apparatus. Its function is as follows. Participates in the innate immune response to Gram-positive bacteria and fungi. Specifically recognizes diacylated and, to a lesser extent, triacylated lipopeptides. In response to diacylated lipopeptides, forms the activation cluster TLR2:TLR6:CD14:CD36, this cluster triggers signaling from the cell surface and subsequently is targeted to the Golgi in a lipid-raft dependent pathway. Acts via MYD88 and TRAF6, leading to NF-kappa-B activation, cytokine secretion and the inflammatory response. Recognizes mycoplasmal macrophage-activating lipopeptide-2kD (MALP-2), soluble tuberculosis factor (STF), phenol-soluble modulin (PSM) and B.burgdorferi outer surface protein A lipoprotein (OspA-L) cooperatively with TLR2. In complex with TLR4, promotes sterile inflammation in monocytes/macrophages in response to oxidized low-density lipoprotein (oxLDL) or amyloid-beta 42. In this context, the initial signal is provided by oxLDL- or amyloid-beta 42-binding to CD36. This event induces the formation of a heterodimer of TLR4 and TLR6, which is rapidly internalized and triggers inflammatory response, leading to the NF-kappa-B-dependent production of CXCL1, CXCL2 and CCL9 cytokines, via MYD88 signaling pathway, and CCL5 cytokine, via TICAM1 signaling pathway, as well as IL1B secretion. The sequence is that of Toll-like receptor 6 (TLR6) from Homo sapiens (Human).